Consider the following 418-residue polypeptide: Imidazolonepropionase (418 aa).

Residues H79 and H81 each contribute to the Fe(3+) site. Zn(2+)-binding residues include H79 and H81. R88, Y151, and H184 together coordinate 4-imidazolone-5-propanoate. Residue Y151 participates in N-formimidoyl-L-glutamate binding. H249 is a binding site for Fe(3+). H249 provides a ligand contact to Zn(2+). Q252 contributes to the 4-imidazolone-5-propanoate binding site. D324 provides a ligand contact to Fe(3+). Residue D324 participates in Zn(2+) binding. Residues N326 and G328 each contribute to the N-formimidoyl-L-glutamate site. T329 serves as a coordination point for 4-imidazolone-5-propanoate.

The protein belongs to the metallo-dependent hydrolases superfamily. HutI family. The cofactor is Zn(2+). It depends on Fe(3+) as a cofactor.

The protein resides in the cytoplasm. The catalysed reaction is 4-imidazolone-5-propanoate + H2O = N-formimidoyl-L-glutamate. Its pathway is amino-acid degradation; L-histidine degradation into L-glutamate; N-formimidoyl-L-glutamate from L-histidine: step 3/3. Functionally, catalyzes the hydrolytic cleavage of the carbon-nitrogen bond in imidazolone-5-propanoate to yield N-formimidoyl-L-glutamate. It is the third step in the universal histidine degradation pathway. This chain is Imidazolonepropionase, found in Colwellia psychrerythraea (strain 34H / ATCC BAA-681) (Vibrio psychroerythus).